The chain runs to 337 residues: GTPase Obg (337 aa).

The Obg domain maps to 1-159 (MKFVDSASIF…LMLNMELKLM (159 aa)). Positions 160 to 323 (ADVGLVGFPN…LKDELWREVS (164 aa)) constitute an OBG-type G domain. GTP contacts are provided by residues 166–173 (GFPNAGKS), 191–195 (FTTLV), 213–216 (DIPG), 280–283 (TKMD), and 304–306 (SAV). Positions 173 and 193 each coordinate Mg(2+).

Belongs to the TRAFAC class OBG-HflX-like GTPase superfamily. OBG GTPase family. In terms of assembly, monomer. It depends on Mg(2+) as a cofactor.

Its subcellular location is the cytoplasm. Its function is as follows. An essential GTPase which binds GTP, GDP and possibly (p)ppGpp with moderate affinity, with high nucleotide exchange rates and a fairly low GTP hydrolysis rate. Plays a role in control of the cell cycle, stress response, ribosome biogenesis and in those bacteria that undergo differentiation, in morphogenesis control. The protein is GTPase Obg of Pelodictyon phaeoclathratiforme (strain DSM 5477 / BU-1).